A 244-amino-acid chain; its full sequence is Carbonic anhydrase (244 aa).

The N-terminal stretch at 1–19 is a signal peptide; sequence MKGKLSIALMLSVCFSASA. Residues 23-244 enclose the Alpha-carbonic anhydrase domain; that stretch reads VHWGYEGNGD…QPLNGRIIIH (222 aa). Cysteine 46 and cysteine 199 are joined by a disulfide. The active-site Proton acceptor is the histidine 84. Zn(2+)-binding residues include histidine 109, histidine 111, and histidine 128. 195 to 196 is a binding site for substrate; the sequence is TT.

The protein belongs to the alpha-carbonic anhydrase family. The cofactor is Zn(2+).

It is found in the periplasm. It carries out the reaction hydrogencarbonate + H(+) = CO2 + H2O. Reversible hydration of carbon dioxide. This Pectobacterium carotovorum (Erwinia carotovora) protein is Carbonic anhydrase (cah).